An 843-amino-acid chain; its full sequence is Excretory canal abnormal protein 6 (843 aa).

Disordered regions lie at residues 54 to 135, 568 to 601, 748 to 767, and 773 to 843; these read QLKD…EKKT, TLESSFTPPPPPPLESPTDSTSSKENESVKPAKT, TPLSRRMSAPVVRKPTMTAE, and TMKP…PKWV. Pro residues-rich tracts occupy residues 66–76 and 83–103; these read TPPPPPPPPPL and APPPPPPPPPPTLKAPPPPPI. The 386-residue stretch at 127–512 folds into the FH2 domain; it reads FLPKKEKKTK…KEEKKETQTT (386 aa). 2 stretches are compositionally biased toward polar residues: residues 776–792 and 819–830; these read PSVSTSARPSLINTSSH and IPQSPTVTSSAR.

The protein belongs to the formin homology family. In terms of tissue distribution, expressed in the excretory cell and mostly accumulates at the tip of the excretory cell canals.

Its subcellular location is the cytoplasm. The protein localises to the cytoskeleton. In terms of biological role, constitutively active protein required for microtubule and F-actin growth, structural maintenance and organization during excretory cell tubulogenesis. The protein is Excretory canal abnormal protein 6 of Caenorhabditis elegans.